The following is a 492-amino-acid chain: Spore germination protein XA (492 aa).

7 consecutive transmembrane segments (helical) span residues 246–266, 285–305, 325–345, 353–373, 377–397, 413–433, and 442–462; these read FILL…FPFF, LLSL…VALV, EGIP…FELL, PAAF…QAAI, FVSP…FTLV, FLMS…LIVI, and GLPF…PSTF.

This sequence belongs to the GerABKA family.

It localises to the cell membrane. In terms of biological role, may allow B.anthracis to germinate within phagocytic cells and therefore involved in virulence. This chain is Spore germination protein XA (gerXA), found in Bacillus anthracis.